The sequence spans 94 residues: ESAT-6-like protein EsxI (94 aa).

This sequence belongs to the WXG100 family. ESAT-6 subfamily.

The protein resides in the secreted. In Mycobacterium bovis (strain ATCC BAA-935 / AF2122/97), this protein is ESAT-6-like protein EsxI.